The sequence spans 346 residues: Glycosyltransferase 1 domain-containing protein 1 (346 aa).

The first 16 residues, 1 to 16, serve as a signal peptide directing secretion; the sequence is MRLLFLAVLRPHTGNA.

Belongs to the glycosyltransferase group 1 family. Glycosyltransferase 4 subfamily.

It localises to the secreted. The polypeptide is Glycosyltransferase 1 domain-containing protein 1 (GLT1D1) (Homo sapiens (Human)).